Here is a 206-residue protein sequence, read N- to C-terminus: Flavin prenyltransferase UbiX (206 aa).

FMN-binding positions include 14-16, threonine 40, 101-104, and arginine 136; these read GAS and SMGT. Residues tyrosine 166 and lysine 182 each contribute to the dimethylallyl phosphate site.

The protein belongs to the UbiX/PAD1 family.

The catalysed reaction is dimethylallyl phosphate + FMNH2 = prenylated FMNH2 + phosphate. Functionally, flavin prenyltransferase that catalyzes the synthesis of the prenylated FMN cofactor (prenyl-FMN) for 4-hydroxy-3-polyprenylbenzoic acid decarboxylase UbiD. The prenyltransferase is metal-independent and links a dimethylallyl moiety from dimethylallyl monophosphate (DMAP) to the flavin N5 and C6 atoms of FMN. This chain is Flavin prenyltransferase UbiX, found in Halalkalibacterium halodurans (strain ATCC BAA-125 / DSM 18197 / FERM 7344 / JCM 9153 / C-125) (Bacillus halodurans).